The chain runs to 689 residues: Zinc finger protein 185 (689 aa).

2 disordered regions span residues 1–253 and 298–534; these read MSIS…GRTK and APDV…SCTS. Residues 35–52 are compositionally biased toward basic and acidic residues; sequence LKGDKSWITKQDESEGRT. Serine 66 carries the phosphoserine modification. Residues 95 to 114 are compositionally biased toward polar residues; it reads IDSSSQPQQQFPKANGTPKS. Serine 153 bears the Phosphoserine mark. A compositionally biased stretch (acidic residues) spans 157-166; sequence DTEEEEEEEV. At proline 206 the chain carries Phosphoserine. Basic and acidic residues-rich tracts occupy residues 217-232 and 310-331; these read KRVE…EKSQ and NKDK…EEAF. Polar residues predominate over residues 338-349; the sequence is AARSSAQLSDGN. Low complexity-rich tracts occupy residues 373 to 382 and 434 to 444; these read SSSATSVSAV and DPAVPAQQPAD. Position 447 is a phosphothreonine (threonine 447). Residues 448-458 show a composition bias toward polar residues; sequence PERQSSPSGSE. 2 positions are modified to phosphoserine: serine 453 and serine 465. Positions 504–524 are enriched in polar residues; that stretch reads PTQQPADPSTPEQQNSPSGSE. An LIM zinc-binding domain is found at 627–689; it reads GICTYCNREI…HCGKCYEKLF (63 aa).

Expressed in placenta, pancreas and kidney. Also expressed in prostate, testis, ovary and blood.

Its subcellular location is the cytoplasm. It localises to the cytoskeleton. The protein resides in the cell junction. It is found in the focal adhesion. In terms of biological role, may be involved in the regulation of cellular proliferation and/or differentiation. The chain is Zinc finger protein 185 (ZNF185) from Homo sapiens (Human).